The following is a 437-amino-acid chain: Branched-chain amino acid transport system 2 carrier protein (437 aa).

12 helical membrane-spanning segments follow: residues 9 to 29 (LLAL…IIFP), 43 to 63 (AAFG…VALA), 80 to 100 (AGVA…ATPR), 117 to 137 (GGVP…FLVL), 149 to 169 (VITP…IFAP), 192 to 212 (GYLT…ATAI), 228 to 248 (MIAG…LFYL), 280 to 300 (LLLA…LITA), 308 to 328 (LLPV…LLVA), 335 to 355 (LISL…VLIA), 369 to 389 (VFVP…LGAA), and 404 to 424 (LADQ…LAVV).

This sequence belongs to the branched chain amino acid transporter family.

It is found in the cell inner membrane. Functionally, component of the LIV-II transport system for branched-chain amino acids. BraB is specific for isoleucine, leucine and valine. The LIV-II transport system is coupled to sodium and lithium ions. This Pseudomonas aeruginosa (strain ATCC 15692 / DSM 22644 / CIP 104116 / JCM 14847 / LMG 12228 / 1C / PRS 101 / PAO1) protein is Branched-chain amino acid transport system 2 carrier protein (braB).